Consider the following 274-residue polypeptide: Large ribosomal subunit protein uL2 (274 aa).

The interval 223–274 (VAMNPVDHPMGGGEGKASGGHPRSRTGLYAKGKKTRNTNKYSKNYILSRKKR) is disordered.

The protein belongs to the universal ribosomal protein uL2 family. As to quaternary structure, part of the 50S ribosomal subunit. Forms a bridge to the 30S subunit in the 70S ribosome.

Its function is as follows. One of the primary rRNA binding proteins. Required for association of the 30S and 50S subunits to form the 70S ribosome, for tRNA binding and peptide bond formation. It has been suggested to have peptidyltransferase activity; this is somewhat controversial. Makes several contacts with the 16S rRNA in the 70S ribosome. The protein is Large ribosomal subunit protein uL2 of Amoebophilus asiaticus (strain 5a2).